Here is a 2944-residue protein sequence, read N- to C-terminus: Collagen alpha-1(VII) chain (2944 aa).

Positions 1-24 (MRLRLLVAALCAAEILMGAPEVWA) are cleaved as a signal peptide. The segment at 18–1254 (GAPEVWAQPR…TGPCAVHCPK (1237 aa)) is nonhelical region (NC1). In terms of domain architecture, VWFA 1 spans 39–212 (DIVFLLDGSS…SILRTLLPLI (174 aa)). 9 Fibronectin type-III domains span residues 235–330 (GPRD…TAKE), 331–417 (GLEL…TASS), 418–508 (VEQT…LEQL), 511–598 (PVMN…DPEA), 601–688 (VVPG…DPLG), 689–776 (PVRR…APEP), 779–867 (SVSK…PPAT), 870–957 (LLET…EPSH), and 959–1053 (PSTE…SHGP). The N-linked (GlcNAc...) asparagine glycan is linked to Asn338. A glycan (N-linked (GlcNAc...) asparagine) is linked at Asn787. Residues 1055-1230 (DVVFLLHATR…PGLDRAVSDL (176 aa)) enclose the VWFA 2 domain. Residue Asn1110 is glycosylated (N-linked (GlcNAc...) asparagine). The Cell attachment site signature appears at 1171 to 1173 (RGD). The segment at 1255–1475 (GQKGEPGVTG…GLRGAPGMTG (221 aa)) is interrupted collagenous region. Residues 1255–2775 (GQKGEPGVTG…GPRGEKGEAA (1521 aa)) form a triple-helical region region. Disordered regions lie at residues 1259 to 1934 (EPGV…GSLP) and 1960 to 2773 (SSGS…EKGE). A compositionally biased stretch (low complexity) spans 1338-1352 (RGPQGPKGEPGEPGQ). Over residues 1353–1363 (ITGGGGPGFPG) the composition is skewed to gly residues. Basic and acidic residues-rich tracts occupy residues 1397–1406 (KGDKGDRGER) and 1439–1448 (PGEKGEKGDC). The segment covering 1507–1518 (PGAAGHPGVEGP) has biased composition (low complexity). 3 stretches are compositionally biased toward basic and acidic residues: residues 1527–1536 (RRGEKGEPGR), 1627–1639 (RGRDGEAGEKGDE), and 1666–1680 (VGEKGDQGDPGEDGR). Residues 1813 to 1822 (PPGPPGPPGV) show a composition bias toward pro residues. Basic and acidic residues-rich tracts occupy residues 1846 to 1855 (EDGRKGEKGD), 1862 to 1871 (EGPDGPKGER), and 1968 to 1984 (PERRPGPKGDPGDRGPP). Residues 2002–2004 (RGD) carry the Cell attachment site motif. The span at 2040 to 2049 (GRAGGSGEAG) shows a compositional bias: gly residues. A compositionally biased stretch (basic and acidic residues) spans 2050-2068 (RPGERGERGEKGERGDQGR). Positions 2063–2065 (RGD) match the Cell attachment site motif. Pro residues predominate over residues 2074 to 2083 (LPGPPGPPGP). A compositionally biased stretch (basic and acidic residues) spans 2130–2140 (DVGEPGKRGHD). Residues Pro2158, Pro2167, Pro2176, and Pro2179 each carry the 4-hydroxyproline modification. Low complexity-rich tracts occupy residues 2182-2197 (PGLAGPAGPQGPSGLK), 2226-2241 (SGLVGPQGSPGLPGQV), 2279-2299 (PKGEPGPVGAPGQVVVGPPGA), and 2306-2317 (PGDLAGALLGEP). The segment covering 2319–2335 (AKGDRGLPGPRGEKGEA) has biased composition (basic and acidic residues). Positions 2414–2427 (ERGLAGPPGREGAP) are enriched in low complexity. Basic and acidic residues-rich tracts occupy residues 2462 to 2477 (RGERGEPGVRGEDGHP) and 2525 to 2544 (AKGDMGERGPRGIDGDKGPR). Residues 2576–2594 (PKGEPGAAGIPGEPGAPGK) are compositionally biased toward low complexity. A Cell attachment site motif is present at residues 2601–2603 (RGD). Basic and acidic residues predominate over residues 2615-2636 (LKGEKGIKGTCGRDGERGDKGE). 5-hydroxylysine is present on residues Lys2616 and Lys2622. The short motif at 2631–2633 (RGD) is the Cell attachment site element. 4-hydroxyproline occurs at positions 2655, 2658, and 2664. The segment covering 2695 to 2704 (GPPGVGGFPG) has biased composition (gly residues). Positions 2776–2944 (LTEDDIRDFV…GVHSQKTGAA (169 aa)) are nonhelical region (NC2). Positions 2879–2931 (CSLPLDEGSCTAYTLRWYHRAVPGGTACHPFVYGGCGGNANRFGTREACERRC) constitute a BPTI/Kunitz inhibitor domain. 3 disulfides stabilise this stretch: Cys2879–Cys2931, Cys2888–Cys2914, and Cys2906–Cys2927.

As to quaternary structure, homotrimer. Interacts with MIA3/TANGO1; facilitating its loading into transport carriers and subsequent secretion. Prolines at the third position of the tripeptide repeating unit (G-X-Y) are hydroxylated in some or all of the chains.

It localises to the secreted. The protein localises to the extracellular space. Its subcellular location is the extracellular matrix. The protein resides in the basement membrane. Stratified squamous epithelial basement membrane protein that forms anchoring fibrils which may contribute to epithelial basement membrane organization and adherence by interacting with extracellular matrix (ECM) proteins such as type IV collagen. This chain is Collagen alpha-1(VII) chain, found in Mus musculus (Mouse).